A 469-amino-acid chain; its full sequence is Glutamate--tRNA ligase 1 (469 aa).

The 'HIGH' region motif lies at 10 to 20; it reads PSPTGYLHIGG. 4 residues coordinate Zn(2+): Cys-99, Cys-101, Cys-126, and Asp-128. The short motif at 237–241 is the 'KMSKS' region element; sequence RLSKR. Lys-240 is a binding site for ATP.

The protein belongs to the class-I aminoacyl-tRNA synthetase family. Glutamate--tRNA ligase type 1 subfamily. Monomer. Zn(2+) is required as a cofactor.

The protein resides in the cytoplasm. It carries out the reaction tRNA(Glu) + L-glutamate + ATP = L-glutamyl-tRNA(Glu) + AMP + diphosphate. Functionally, catalyzes the attachment of glutamate to tRNA(Glu) in a two-step reaction: glutamate is first activated by ATP to form Glu-AMP and then transferred to the acceptor end of tRNA(Glu). In Coxiella burnetii (strain RSA 331 / Henzerling II), this protein is Glutamate--tRNA ligase 1.